Consider the following 64-residue polypeptide: Conotoxin Mr3.5 (64 aa).

A signal peptide spans 1–19 (MSKLGVLLTICLLLFPLTA). A propeptide spanning residues 20 to 46 (LPLDGDQPADQRAERTQAEKHSLPDPR) is cleaved from the precursor. Intrachain disulfides connect Cys49/Cys58, Cys50/Cys62, and Cys54/Cys63. Position 63 is a cysteine amide (Cys63).

This sequence belongs to the conotoxin M superfamily. Expressed by the venom duct.

The protein localises to the secreted. This is Conotoxin Mr3.5 from Conus marmoreus (Marble cone).